We begin with the raw amino-acid sequence, 397 residues long: Elongation factor Tu (397 aa).

The region spanning 10-207 (KPHVNIGTIG…AVDESIPDPV (198 aa)) is the tr-type G domain. Positions 19–26 (GHVDHGKT) are G1. Position 19-26 (19-26 (GHVDHGKT)) interacts with GTP. Residue Thr26 participates in Mg(2+) binding. Residues 63-67 (GITIN) form a G2 region. Residues 84–87 (DAPG) form a G3 region. Residues 84–88 (DAPGH) and 139–142 (NKAD) each bind GTP. The segment at 139-142 (NKAD) is G4. The segment at 177 to 179 (SGL) is G5.

It belongs to the TRAFAC class translation factor GTPase superfamily. Classic translation factor GTPase family. EF-Tu/EF-1A subfamily. As to quaternary structure, monomer.

It localises to the cytoplasm. It catalyses the reaction GTP + H2O = GDP + phosphate + H(+). Functionally, GTP hydrolase that promotes the GTP-dependent binding of aminoacyl-tRNA to the A-site of ribosomes during protein biosynthesis. This is Elongation factor Tu from Tropheryma whipplei (strain TW08/27) (Whipple's bacillus).